A 461-amino-acid polypeptide reads, in one-letter code: Chromosomal replication initiator protein DnaA (461 aa).

The domain I, interacts with DnaA modulators stretch occupies residues 1–83 (MTASLWQQCL…LHFAVGRRPT (83 aa)). Residues 83 to 124 (TAATVQMNTAAAPVADVRIGPAITVPSWTSKQDAMPEINHKS) are domain II. Residues 125–341 (NINETYTFEN…GALNRVIANA (217 aa)) are domain III, AAA+ region. 4 residues coordinate ATP: glycine 169, glycine 171, lysine 172, and threonine 173. The interval 342-461 (RFTGKPINID…YSNLIRTLSS (120 aa)) is domain IV, binds dsDNA.

This sequence belongs to the DnaA family. Oligomerizes as a right-handed, spiral filament on DNA at oriC.

It localises to the cytoplasm. In terms of biological role, plays an essential role in the initiation and regulation of chromosomal replication. ATP-DnaA binds to the origin of replication (oriC) to initiate formation of the DNA replication initiation complex once per cell cycle. Binds the DnaA box (a 9 base pair repeat at the origin) and separates the double-stranded (ds)DNA. Forms a right-handed helical filament on oriC DNA; dsDNA binds to the exterior of the filament while single-stranded (ss)DNA is stabiized in the filament's interior. The ATP-DnaA-oriC complex binds and stabilizes one strand of the AT-rich DNA unwinding element (DUE), permitting loading of DNA polymerase. After initiation quickly degrades to an ADP-DnaA complex that is not apt for DNA replication. Binds acidic phospholipids. The sequence is that of Chromosomal replication initiator protein DnaA from Tolumonas auensis (strain DSM 9187 / NBRC 110442 / TA 4).